The sequence spans 677 residues: UvrABC system protein B (677 aa).

One can recognise a Helicase ATP-binding domain in the interval 24–412 (EGVLEGVPAQ…EGIVVEQVIR (389 aa)). Residue 37 to 44 (GVTGSGKT) participates in ATP binding. The Beta-hairpin motif lies at 90 to 113 (YYDYYQPEAYLPSSDTYIEKDLAI). In terms of domain architecture, Helicase C-terminal spans 429-591 (QIDDLMEEIQ…ITPQQIKKAR (163 aa)). The 36-residue stretch at 635 to 670 (EKSMERTRKLMQEAAKKLEFIEAAQYRDELLKMEDL) folds into the UVR domain.

The protein belongs to the UvrB family. As to quaternary structure, forms a heterotetramer with UvrA during the search for lesions. Interacts with UvrC in an incision complex.

Its subcellular location is the cytoplasm. In terms of biological role, the UvrABC repair system catalyzes the recognition and processing of DNA lesions. A damage recognition complex composed of 2 UvrA and 2 UvrB subunits scans DNA for abnormalities. Upon binding of the UvrA(2)B(2) complex to a putative damaged site, the DNA wraps around one UvrB monomer. DNA wrap is dependent on ATP binding by UvrB and probably causes local melting of the DNA helix, facilitating insertion of UvrB beta-hairpin between the DNA strands. Then UvrB probes one DNA strand for the presence of a lesion. If a lesion is found the UvrA subunits dissociate and the UvrB-DNA preincision complex is formed. This complex is subsequently bound by UvrC and the second UvrB is released. If no lesion is found, the DNA wraps around the other UvrB subunit that will check the other stand for damage. The chain is UvrABC system protein B from Bacteroides fragilis (strain YCH46).